Here is a 594-residue protein sequence, read N- to C-terminus: Proteasome-associated ATPase (594 aa).

Residues 1–10 (MMETPNNDSS) show a composition bias toward polar residues. Positions 1–23 (MMETPNNDSSRTPDEAAGAPDPE) are disordered. A coiled-coil region spans residues 35-86 (ADRQVNILRDKLRHIDRQLAAATQNNSKLVGMLETAKAEILRLKNALDQEGQ). 282–287 (GCGKTL) provides a ligand contact to ATP. Residues 593–594 (YL) form a docks into pockets in the proteasome alpha-ring region.

Belongs to the AAA ATPase family. As to quaternary structure, homohexamer. Assembles into a hexameric ring structure that caps the 20S proteasome core. Strongly interacts with the prokaryotic ubiquitin-like protein Pup through a hydrophobic interface; the interacting region of ARC lies in its N-terminal coiled-coil domain. There is one Pup binding site per ARC hexamer ring. Upon ATP-binding, the C-terminus of ARC interacts with the alpha-rings of the proteasome core, possibly by binding to the intersubunit pockets.

The protein operates within protein degradation; proteasomal Pup-dependent pathway. ATPase which is responsible for recognizing, binding, unfolding and translocation of pupylated proteins into the bacterial 20S proteasome core particle. May be essential for opening the gate of the 20S proteasome via an interaction with its C-terminus, thereby allowing substrate entry and access to the site of proteolysis. Thus, the C-termini of the proteasomal ATPase may function like a 'key in a lock' to induce gate opening and therefore regulate proteolysis. This chain is Proteasome-associated ATPase, found in Arthrobacter sp. (strain FB24).